Reading from the N-terminus, the 347-residue chain is Protein YIPF3 (347 aa).

Positions 1–28 (MATQAAPASGVRNGAGPEWGGFEENIQG) are disordered. At Ala2 the chain carries N-acetylalanine. Over 2-145 (ATQAAPASGV…PIKMVNFPQK (144 aa)) the chain is Cytoplasmic. Residues 146-166 (VAGELYGPLMLVFTLVAILLH) traverse the membrane as a helical segment. Topologically, residues 167–184 (GMKTSDTIIREGTLMGTA) are lumenal. A helical membrane pass occupies residues 185 to 205 (IGTCFGYWLGVSSFIYFLAYL). Residues 206 to 211 (CNAQIT) are Cytoplasmic-facing. A helical membrane pass occupies residues 212 to 234 (MLQMLALLGYGLFGHCIVLFITY). Over 235–237 (NIH) the chain is Lumenal. Residues 238 to 260 (LHALFYLFWLLLGGLSTLRMVAV) traverse the membrane as a helical segment. Topologically, residues 261 to 271 (LVSRTVGPTQR) are cytoplasmic. Residues 272–292 (LLLCGTLAALHMLFLLYLHFA) form a helical membrane-spanning segment. The Lumenal segment spans residues 293–347 (YHKVVEGILDTLEGPNIPPMQRVPRDIPAVLPAAKLPVAVVNATAKAIAVTLQSH). Asn334 carries an N-linked (GlcNAc...) asparagine glycan.

It belongs to the YIP1 family. Interacts with YIPF4 and YIPF5.

It localises to the cell membrane. Its subcellular location is the golgi apparatus. The protein localises to the cis-Golgi network membrane. The protein resides in the cytoplasm. Functionally, involved in the maintenance of the Golgi structure. May play a role in hematopoiesis. The chain is Protein YIPF3 (Yipf3) from Rattus norvegicus (Rat).